A 379-amino-acid chain; its full sequence is MPFEARDDNVDPDAIGNHYHDDGLLWQTHYAAVEVFDYPHATMHMKIFCQSYWGELHDLTFSYKRGSTKEPEEENAWETKFRQSLARPGTDEAAMMHTPLAAVVRYDTGNPTTHLFYISTGFKIREVIWKNGSQTNDCLGITVCPTSSLAVTKWGAGSQTHFRLYYQSKAGTIEEHCLDCNAGTWTKGATLSGPVSAYDDDSPLRGTSLSFINLAQDKPELRGYFQTAKGSIQEFTYKGTKWSTSKIGVDAAPFRTPLAAITVEKNKIAALYYVDAYNRINEVLWEGDWEGSERIDGESVAPGTRLAVASLKYIGHDKIHMFSSGLVNVITQRVWTRENGAWGDRPTIVDFEAPVQVEVEPGLDPAIHLTKPTRDGRRV.

Residue Glu126 coordinates alpha-L-fucose. The beta-L-fucose site is built by Glu126, Arg163, and Trp185. Alpha-L-fucose contacts are provided by Trp185, Arg222, and Glu234. Beta-L-fucose-binding residues include Trp242 and Glu282. Residue Trp289 participates in alpha-L-fucose binding.

It belongs to the fungal fucose-specific lectin family.

Its function is as follows. Lectin that specifically binds to L-fucose. Is associated with the morphogenesis of the fungus, and plays a role in the formation of the constricting rings involved in nematode-trapping. This chain is Fucose-specific lectin g276, found in Arthrobotrys oligospora (strain ATCC 24927 / CBS 115.81 / DSM 1491) (Nematode-trapping fungus).